Reading from the N-terminus, the 144-residue chain is MQLNELKPVAGSRFKRLRKGRGLSSGHGFTSGRGTKGQKAHGKTRLGFEGGQMPLYRQKPKRGFTSMDHKDFALVSLTTLNQFEDGAEVTPEVLVANGVIKNVKSGVKVLATGKLEKKLTVKANKFSASAVKAIEAAGGTTEVI.

A disordered region spans residues 1 to 55; that stretch reads MQLNELKPVAGSRFKRLRKGRGLSSGHGFTSGRGTKGQKAHGKTRLGFEGGQMPL. Residues 23–35 show a composition bias toward gly residues; it reads LSSGHGFTSGRGT.

Belongs to the universal ribosomal protein uL15 family. As to quaternary structure, part of the 50S ribosomal subunit.

Its function is as follows. Binds to the 23S rRNA. This Limosilactobacillus fermentum (strain NBRC 3956 / LMG 18251) (Lactobacillus fermentum) protein is Large ribosomal subunit protein uL15.